The sequence spans 523 residues: UPF0329 protein ECU02_0050 (523 aa).

Positions 326–386 are disordered; the sequence is EEKAKSKKRG…KTGKKSEGGR (61 aa). The span at 330 to 339 shows a compositional bias: basic residues; it reads KSKKRGKRKS. Over residues 344 to 353 the composition is skewed to basic and acidic residues; sequence EAKEEEKKES. Acidic residues predominate over residues 354–368; that stretch reads ETEEVEAGEEVEMPS.

The protein belongs to the UPF0329 family.

This Encephalitozoon cuniculi (strain GB-M1) (Microsporidian parasite) protein is UPF0329 protein ECU02_0050.